Reading from the N-terminus, the 243-residue chain is Large ribosomal subunit protein uL2 (243 aa).

Disordered regions lie at residues 1-23 (MGKR…PSHR) and 204-243 (PFGG…GGRR). Over residues 228–243 (KVGHIAARKTGRGGRR) the composition is skewed to basic residues.

Belongs to the universal ribosomal protein uL2 family. Part of the 50S ribosomal subunit. Forms a bridge to the 30S subunit in the 70S ribosome.

Functionally, one of the primary rRNA binding proteins. Required for association of the 30S and 50S subunits to form the 70S ribosome, for tRNA binding and peptide bond formation. It has been suggested to have peptidyltransferase activity; this is somewhat controversial. Makes several contacts with the 16S rRNA in the 70S ribosome. The protein is Large ribosomal subunit protein uL2 of Methanopyrus kandleri (strain AV19 / DSM 6324 / JCM 9639 / NBRC 100938).